The following is a 720-amino-acid chain: ATP-dependent DNA helicase Hel308 (720 aa).

Residues Ser23, Gln28, and 46 to 53 (IPTASGKT) each bind ATP. Residues 33 to 197 (KSGILEGKNA…WLNAELIVSD (165 aa)) enclose the Helicase ATP-binding domain. A DEAH box motif is present at residues 145-148 (DEIH). One can recognise a Helicase C-terminal domain in the interval 229–422 (LVYDAIRKKK…NLRSQVLALI (194 aa)).

This sequence belongs to the helicase family. Hel308 subfamily. Monomer. Interacts with PCNA. Mg(2+) serves as cofactor. The cofactor is Zn(2+).

It carries out the reaction Couples ATP hydrolysis with the unwinding of duplex DNA by translocating in the 3'-5' direction.. The enzyme catalyses ATP + H2O = ADP + phosphate + H(+). Its function is as follows. DNA-dependent ATPase and 3'-5' DNA helicase that may be involved in repair of stalled replication forks. Unwinds the lagging strand from forked DNA structures in a 3'-5' direction. PCNA, the DNA polymerase sliding clamp subunit, stimulates the helicase activity, and may alter substrate specificity. Unwinds branched DNA (Holliday junctions) in an ATP-dependent fashion; ss- and dsDNA stimulate ATPase to the greatest extent, although it preferentially binds DNA with a single-stranded region. Processes a RecA-mediated recombination intermediate between gapped circular and homologous linear dsDNA. In Pyrococcus furiosus (strain ATCC 43587 / DSM 3638 / JCM 8422 / Vc1), this protein is ATP-dependent DNA helicase Hel308.